The chain runs to 508 residues: Photosystem II CP47 reaction center protein (508 aa).

The next 6 membrane-spanning stretches (helical) occupy residues 21–36 (SVHI…WAGS), 101–115 (IVFS…IWHW), 140–156 (GIHL…FGAF), 203–218 (IAAG…FHLS), 237–252 (VLSS…AFVV), and 457–472 (SFAL…HGSR).

The protein belongs to the PsbB/PsbC family. PsbB subfamily. PSII is composed of 1 copy each of membrane proteins PsbA, PsbB, PsbC, PsbD, PsbE, PsbF, PsbH, PsbI, PsbJ, PsbK, PsbL, PsbM, PsbT, PsbX, PsbY, PsbZ, Psb30/Ycf12, at least 3 peripheral proteins of the oxygen-evolving complex and a large number of cofactors. It forms dimeric complexes. The cofactor is Binds multiple chlorophylls. PSII binds additional chlorophylls, carotenoids and specific lipids..

The protein localises to the plastid. It localises to the chloroplast thylakoid membrane. Its function is as follows. One of the components of the core complex of photosystem II (PSII). It binds chlorophyll and helps catalyze the primary light-induced photochemical processes of PSII. PSII is a light-driven water:plastoquinone oxidoreductase, using light energy to abstract electrons from H(2)O, generating O(2) and a proton gradient subsequently used for ATP formation. The chain is Photosystem II CP47 reaction center protein from Helianthus annuus (Common sunflower).